The sequence spans 676 residues: Phosphatidylinositol-3,5-bisphosphate 3-phosphatase MTMR6 (676 aa).

The Myotubularin phosphatase domain occupies 125–501 (GWRRLDWNSE…ARFTVWTAMY (377 aa)). Residues Asn249, Asn274, and Ile275 each contribute to the a 1,2-diacyl-sn-glycero-3-phospho-(1D-myo-inositol-3,5-bisphosphate) site. A 1,2-diacyl-sn-glycero-3-phospho-(1D-myo-inositol-3-phosphate) contacts are provided by Asn249, Asn274, and Ile275. Substrate-binding positions include 249-252 (NKVQ), 274-275 (NI), and 335-341 (CSDGWDR). Cys335 (phosphocysteine intermediate) is an active-site residue. Ser336, Asp337, Gly338, Trp339, Asp340, Arg341, Lys377, and Arg381 together coordinate a 1,2-diacyl-sn-glycero-3-phospho-(1D-myo-inositol-3,5-bisphosphate). A 1,2-diacyl-sn-glycero-3-phospho-(1D-myo-inositol-3-phosphate)-binding residues include Ser336, Asp337, Gly338, Trp339, Asp340, and Arg341. Arg381 provides a ligand contact to a 1,2-diacyl-sn-glycero-3-phospho-(1D-myo-inositol-3-phosphate). Arg381 contacts substrate. The FYVE-type zinc finger occupies 618-675 (KWQPLRGADRCSNPACRGEFSSTIERRIHCHLCGMIFCRRCLKVSADERERVCDKCKT).

It belongs to the protein-tyrosine phosphatase family. Non-receptor class myotubularin subfamily. Heterodimer with mtm-9. In terms of tissue distribution, expressed in intestinal cells. Expressed in head neurons, pre-anal ganglion, hypodermal cells, anal depressor muscle and non-neuronal cells in the tail.

Its subcellular location is the cytoplasm. The protein localises to the membrane. It localises to the apical cell membrane. The enzyme catalyses a 1,2-diacyl-sn-glycero-3-phospho-(1D-myo-inositol-3,5-bisphosphate) + H2O = a 1,2-diacyl-sn-glycero-3-phospho-(1D-myo-inositol-5-phosphate) + phosphate. It carries out the reaction a 1,2-diacyl-sn-glycero-3-phospho-(1D-myo-inositol-3-phosphate) + H2O = a 1,2-diacyl-sn-glycero-3-phospho-(1D-myo-inositol) + phosphate. The catalysed reaction is 1,2-dioctanoyl-sn-glycero-3-phospho-(1D-myo-inositol-3,5-bisphosphate) + H2O = 1,2-dioctanoyl-sn-glycero-3-phospho-(1D-myo-inositol-5-phosphate) + phosphate. It catalyses the reaction 1,2-dioctanoyl-sn-glycero-3-phospho-(1-D-myo-inositol-3-phosphate) + H2O = 1,2-dioctanoyl-sn-glycero-3-phospho-(1D-myo-inositol) + phosphate. Its function is as follows. Probable lipid phosphatase that specifically dephosphorylates the D-3 position of phosphatidylinositol 3-phosphate and phosphatidylinositol 3,5-bisphosphate, generating phosphatidylinositol and phosphatidylinositol 5-phosphate. In association with mtm-9, plays a role in endosome trafficking probably by regulating phosphatidylinositol-3-phosphate levels. Regulates fluid phase endocytosis in coelomocytes. Controls the endosomal localization of sorting nexin snx-3 and the levels of sorting receptor mig-14. By regulating the retrograde transport of mig-14, may be involved in the secretion of Wnt ligands such as egl-20. Regulates posterior migration of QL neuroblast descendants and the anterior migration of QR neuroblast descendants and HSN neurons during larval development. Involved in the formation of correct synapse number in DA9 motor neurons probably in part by regulating the secretion of Wnt ligand egl-20. This chain is Phosphatidylinositol-3,5-bisphosphate 3-phosphatase MTMR6, found in Caenorhabditis elegans.